Here is a 138-residue protein sequence, read N- to C-terminus: Peptide methionine sulfoxide reductase MsrB (138 aa).

Residues 15 to 137 (EAEWRAQLDP…NSASLGFEPR (123 aa)) enclose the MsrB domain. The Zn(2+) site is built by C54, C57, C103, and C106. Residue C126 is the Nucleophile of the active site.

It belongs to the MsrB Met sulfoxide reductase family. Requires Zn(2+) as cofactor.

The catalysed reaction is L-methionyl-[protein] + [thioredoxin]-disulfide + H2O = L-methionyl-(R)-S-oxide-[protein] + [thioredoxin]-dithiol. This Methylibium petroleiphilum (strain ATCC BAA-1232 / LMG 22953 / PM1) protein is Peptide methionine sulfoxide reductase MsrB.